Here is a 580-residue protein sequence, read N- to C-terminus: Proline--tRNA ligase (580 aa).

This sequence belongs to the class-II aminoacyl-tRNA synthetase family. ProS type 1 subfamily. Homodimer.

It localises to the cytoplasm. It catalyses the reaction tRNA(Pro) + L-proline + ATP = L-prolyl-tRNA(Pro) + AMP + diphosphate. Functionally, catalyzes the attachment of proline to tRNA(Pro) in a two-step reaction: proline is first activated by ATP to form Pro-AMP and then transferred to the acceptor end of tRNA(Pro). As ProRS can inadvertently accommodate and process non-cognate amino acids such as alanine and cysteine, to avoid such errors it has two additional distinct editing activities against alanine. One activity is designated as 'pretransfer' editing and involves the tRNA(Pro)-independent hydrolysis of activated Ala-AMP. The other activity is designated 'posttransfer' editing and involves deacylation of mischarged Ala-tRNA(Pro). The misacylated Cys-tRNA(Pro) is not edited by ProRS. The chain is Proline--tRNA ligase from Maridesulfovibrio salexigens (strain ATCC 14822 / DSM 2638 / NCIMB 8403 / VKM B-1763) (Desulfovibrio salexigens).